The following is a 331-amino-acid chain: L-lactate dehydrogenase A chain (331 aa).

Residues Gly29–Lys57 and Arg98 each bind NAD(+). Substrate-binding residues include Arg105, Asn137, and Arg168. Residue Asn137 coordinates NAD(+). The active-site Proton acceptor is the His192. Thr247 contributes to the substrate binding site.

The protein belongs to the LDH/MDH superfamily. LDH family. As to quaternary structure, homotetramer.

It localises to the cytoplasm. The enzyme catalyses (S)-lactate + NAD(+) = pyruvate + NADH + H(+). It participates in fermentation; pyruvate fermentation to lactate; (S)-lactate from pyruvate: step 1/1. Its function is as follows. Interconverts simultaneously and stereospecifically pyruvate and lactate with concomitant interconversion of NADH and NAD(+). The chain is L-lactate dehydrogenase A chain (ldha) from Patagonotothen tessellata (Black southern cod).